A 362-amino-acid chain; its full sequence is MIHIKNLSKTYATPHGRFEALRGIDLLIEQGEVFGIIGPSGAGKSTLVQCINLLERPDQGSISIGGQELTGLSEAQLRGQRRRIGMVFQGFNLLSRRTVYGNVALPLEIAGVPRQEIPGKVERLLALVGLEHLRDRYPSQISGGQKQRVGIARALANDPDVLLSDEATSALDPETTHNILALLRDINRKTGVTVVMITHQMEVVREICDRVAVLSHGQVVEMARTQDVFATPQHDVTRAMVSAATSSALTESTLAAVQARIAARAAEQPGSAARLWRLSLTGKDAGGALISDLARQHALDISLVQARVDDIQGVAVGTLFVLAQGTPQAVNNALAALAAHQISVEEIAHEPANDRPALHVAA.

The region spanning 2 to 241 is the ABC transporter domain; that stretch reads IHIKNLSKTY…PQHDVTRAMV (240 aa). An ATP-binding site is contributed by 38–45; sequence GPSGAGKS.

Belongs to the ABC transporter superfamily. Methionine importer (TC 3.A.1.24) family. In terms of assembly, the complex is composed of two ATP-binding proteins (MetN), two transmembrane proteins (MetI) and a solute-binding protein (MetQ).

The protein localises to the cell inner membrane. It catalyses the reaction L-methionine(out) + ATP + H2O = L-methionine(in) + ADP + phosphate + H(+). It carries out the reaction D-methionine(out) + ATP + H2O = D-methionine(in) + ADP + phosphate + H(+). In terms of biological role, part of the ABC transporter complex MetNIQ involved in methionine import. Responsible for energy coupling to the transport system. The chain is Methionine import ATP-binding protein MetN from Bordetella avium (strain 197N).